The following is an 884-amino-acid chain: Probable mixed-linked glucan synthase 9 (884 aa).

Positions Met1–Pro27 are enriched in low complexity. The segment at Met1–Gly34 is disordered. 2 consecutive transmembrane segments (helical) span residues Val73–Leu93 and Ala104–Leu124. Asp195 is a catalytic residue. 2 residues coordinate substrate: Asp396 and Asp398. The active site involves Asp565. Helical transmembrane passes span Thr640–Leu660, Phe672–Val692, Glu708–Leu728, Leu765–Gly785, Ala802–Met822, and Cys830–Val850.

It belongs to the glycosyltransferase 2 family. Plant cellulose synthase-like F subfamily.

Its subcellular location is the golgi apparatus membrane. May catalyze both beta-1,3 and beta-1,4 glycosidic linkage on beta-D-glucan. Essential for (1,3;1,4)-beta-D-glucans synthesis in grasses and cereals (Poaceae). The mixed-linked glucans (which are not present in walls of dicotyledons or most other monocotyledonous plants) are particularly important constituents of the walls of the starchy endosperm and aleurone cells of cereal grains such as oats, wheat, rice and barley. They can account for up to 70% by weight of the wall. The protein is Probable mixed-linked glucan synthase 9 (CSLF9) of Oryza sativa subsp. japonica (Rice).